The primary structure comprises 620 residues: Dihydroxy-acid dehydratase (620 aa).

Mg(2+) is bound at residue Asp-82. Position 123 (Cys-123) interacts with [2Fe-2S] cluster. Mg(2+) contacts are provided by Asp-124 and Lys-125. Position 125 is an N6-carboxylysine (Lys-125). Cys-197 lines the [2Fe-2S] cluster pocket. Residue Glu-493 coordinates Mg(2+). Ser-519 functions as the Proton acceptor in the catalytic mechanism.

The protein belongs to the IlvD/Edd family. Homodimer. Requires [2Fe-2S] cluster as cofactor. The cofactor is Mg(2+).

The enzyme catalyses (2R)-2,3-dihydroxy-3-methylbutanoate = 3-methyl-2-oxobutanoate + H2O. It carries out the reaction (2R,3R)-2,3-dihydroxy-3-methylpentanoate = (S)-3-methyl-2-oxopentanoate + H2O. It functions in the pathway amino-acid biosynthesis; L-isoleucine biosynthesis; L-isoleucine from 2-oxobutanoate: step 3/4. It participates in amino-acid biosynthesis; L-valine biosynthesis; L-valine from pyruvate: step 3/4. Functionally, functions in the biosynthesis of branched-chain amino acids. Catalyzes the dehydration of (2R,3R)-2,3-dihydroxy-3-methylpentanoate (2,3-dihydroxy-3-methylvalerate) into 2-oxo-3-methylpentanoate (2-oxo-3-methylvalerate) and of (2R)-2,3-dihydroxy-3-methylbutanoate (2,3-dihydroxyisovalerate) into 2-oxo-3-methylbutanoate (2-oxoisovalerate), the penultimate precursor to L-isoleucine and L-valine, respectively. This Bifidobacterium longum subsp. infantis (strain ATCC 15697 / DSM 20088 / JCM 1222 / NCTC 11817 / S12) protein is Dihydroxy-acid dehydratase.